Consider the following 506-residue polypeptide: Aldehyde dehydrogenase [NAD(P)+] 1 (506 aa).

The Proton acceptor role is filled by E268. C302 serves as the catalytic Nucleophile.

The protein belongs to the aldehyde dehydrogenase family.

The protein localises to the cytoplasm. It carries out the reaction an aldehyde + NAD(+) + H2O = a carboxylate + NADH + 2 H(+). The catalysed reaction is 3-aminopropanal + NAD(+) + H2O = beta-alanine + NADH + 2 H(+). Cytoplasmic aldehyde dehydrogenase involved in ethanol oxidation. Required for pantothenic acid production through the conversion of 3-aminopropanal to beta-alanine, an intermediate in pantothenic acid (vitamin B5) and coenzyme A (CoA) biosynthesis. This chain is Aldehyde dehydrogenase [NAD(P)+] 1 (ALD2), found in Saccharomyces cerevisiae (strain ATCC 204508 / S288c) (Baker's yeast).